Here is a 78-residue protein sequence, read N- to C-terminus: Small ribosomal subunit protein bS18 (78 aa).

Belongs to the bacterial ribosomal protein bS18 family. As to quaternary structure, part of the 30S ribosomal subunit. Forms a tight heterodimer with protein bS6.

Its function is as follows. Binds as a heterodimer with protein bS6 to the central domain of the 16S rRNA, where it helps stabilize the platform of the 30S subunit. In Geobacillus sp. (strain WCH70), this protein is Small ribosomal subunit protein bS18.